The chain runs to 312 residues: Protoheme IX farnesyltransferase (312 aa).

Helical transmembrane passes span 31 to 51 (VMSLVVFTALVGLLMAPGSFH), 52 to 72 (PVLAITAIICIAVGGGAAGAL), 119 to 139 (ILVNWIAAGLLAFTIFFYVVI), 152 to 172 (IVIGGAAGALPPVVAWASVTG), 179 to 199 (ILLFLIIFFWTPPHFWALALF), 225 to 245 (ILLYTVALVAVAAAPWPLGYF), 247 to 267 (VIYGVASLALGGWMLVLAVRV), and 288 to 308 (ILYLFALFAILLVEVVAAAVL).

The protein belongs to the UbiA prenyltransferase family. Protoheme IX farnesyltransferase subfamily.

Its subcellular location is the cell inner membrane. The enzyme catalyses heme b + (2E,6E)-farnesyl diphosphate + H2O = Fe(II)-heme o + diphosphate. It functions in the pathway porphyrin-containing compound metabolism; heme O biosynthesis; heme O from protoheme: step 1/1. Converts heme B (protoheme IX) to heme O by substitution of the vinyl group on carbon 2 of heme B porphyrin ring with a hydroxyethyl farnesyl side group. This is Protoheme IX farnesyltransferase from Rhodopseudomonas palustris (strain ATCC BAA-98 / CGA009).